Reading from the N-terminus, the 238-residue chain is Pyridoxine 5'-phosphate synthase (238 aa).

N7 contacts 3-amino-2-oxopropyl phosphate. 9 to 10 lines the 1-deoxy-D-xylulose 5-phosphate pocket; the sequence is DH. R18 lines the 3-amino-2-oxopropyl phosphate pocket. The active-site Proton acceptor is the H43. 1-deoxy-D-xylulose 5-phosphate is bound by residues R45 and H50. E70 serves as the catalytic Proton acceptor. 1-deoxy-D-xylulose 5-phosphate is bound at residue T100. H191 functions as the Proton donor in the catalytic mechanism. 3-amino-2-oxopropyl phosphate contacts are provided by residues G192 and 213 to 214; that span reads GH.

This sequence belongs to the PNP synthase family. In terms of assembly, homooctamer; tetramer of dimers.

The protein resides in the cytoplasm. The catalysed reaction is 3-amino-2-oxopropyl phosphate + 1-deoxy-D-xylulose 5-phosphate = pyridoxine 5'-phosphate + phosphate + 2 H2O + H(+). Its pathway is cofactor biosynthesis; pyridoxine 5'-phosphate biosynthesis; pyridoxine 5'-phosphate from D-erythrose 4-phosphate: step 5/5. Its function is as follows. Catalyzes the complicated ring closure reaction between the two acyclic compounds 1-deoxy-D-xylulose-5-phosphate (DXP) and 3-amino-2-oxopropyl phosphate (1-amino-acetone-3-phosphate or AAP) to form pyridoxine 5'-phosphate (PNP) and inorganic phosphate. This is Pyridoxine 5'-phosphate synthase from Thermosynechococcus vestitus (strain NIES-2133 / IAM M-273 / BP-1).